A 242-amino-acid chain; its full sequence is NLP effector protein 8 (242 aa).

Positions 1–17 (MHLTVFYLVALCTFASA) are cleaved as a signal peptide. Residues 108-118 (AIMYAWYFPRD) carry the Conserved undecapeptide motif motif. Residues 127–133 (GHRNAWE) carry the Conserved heptapeptide motif motif. A glycan (N-linked (GlcNAc...) asparagine) is linked at Asn206.

It belongs to the Necrosis inducing protein (NPP1) family.

The protein resides in the secreted. Functionally, probable secreted effector that may act as a pathogen-associated molecular pattern (PAMP) recognized by the plant immune system. The sequence is that of NLP effector protein 8 from Plasmopara viticola (Downy mildew of grapevine).